A 585-amino-acid chain; its full sequence is MSRARCHALFLAAVSPRGATTRVAVRRGLSAWPVLQEPDMEYQDAVRTLNTLQTNANYLEMVKRKRGDPQTQLEAMKLYLARSGLQVEDLDQLNIIHITGTKGKGSTCAFTERILRSYGLKTGFFSSPHLVQVRERIRINGQPISSELFTKHFWRLYHRLEETKDDSSCVSMPGYFRFLTLMAFHVFLQEKVDLAVLEVGIGGAYDCTNIIRKPVVCGITSLGIDHTGLLGDTMEKIAWQKGGIFKSGVPAFTVLQPDEPLAVLRDRAQQISCPLYLCPPLQALEEGGPPLTLGLEGEHQRSNAALALQVARCWLQQKGYQDAGELKASRPSLPGQLPLAPVFQPTPRMQQGLRHTEWPGRTQLLRRGPLTWYLDGAHTTSSMQACVRWFRQALHRCERPDSGSEVRVLLFNSTGDRDSAALLKLLQPCQFDYAIFCPNLAEMASTDNADQQNFTVTLDQVLLRCLAHQQHWSRLHEEQVSPDPWSTPGQEQDGPASLLLAPHPPHTHSASSLVFSCISHALQWITQGRDPLFQPPSPPRGLLAHPVADSGATVLQEAADIHVLVTGSLHLVGGVLKLLEPSLSQ.

Residues Met-1–Asp-39 constitute a mitochondrion transit peptide. Gly-103 to Ser-106 provides a ligand contact to ATP. Residues Ser-127, Glu-198, and His-226 each coordinate Mg(2+). Residues Arg-361 and Asp-375 each contribute to the ATP site. The tract at residues Glu-477 to Ser-497 is disordered. Ser-537 carries the post-translational modification Phosphoserine.

The protein belongs to the folylpolyglutamate synthase family. As to quaternary structure, monomer. The cofactor is a monovalent cation.

It localises to the mitochondrion inner membrane. The protein localises to the mitochondrion matrix. The protein resides in the cytoplasm. The enzyme catalyses (6S)-5,6,7,8-tetrahydrofolyl-(gamma-L-Glu)(n) + L-glutamate + ATP = (6S)-5,6,7,8-tetrahydrofolyl-(gamma-L-Glu)(n+1) + ADP + phosphate + H(+). The protein operates within cofactor biosynthesis; tetrahydrofolylpolyglutamate biosynthesis. Catalyzes conversion of folates to polyglutamate derivatives allowing concentration of folate compounds in the cell and the intracellular retention of these cofactors, which are important substrates for most of the folate-dependent enzymes that are involved in one-carbon transfer reactions involved in purine, pyrimidine and amino acid synthesis. This chain is Folylpolyglutamate synthase, mitochondrial (FPGS), found in Bos taurus (Bovine).